The primary structure comprises 262 residues: Ribose-5-phosphate isomerase A (262 aa).

Substrate contacts are provided by residues threonine 33–threonine 36, aspartate 89–aspartate 92, and lysine 102–glycine 105. The Proton acceptor role is filled by glutamate 111. Lysine 129 is a binding site for substrate.

It belongs to the ribose 5-phosphate isomerase family. In terms of assembly, homodimer.

The enzyme catalyses aldehydo-D-ribose 5-phosphate = D-ribulose 5-phosphate. It functions in the pathway carbohydrate degradation; pentose phosphate pathway; D-ribose 5-phosphate from D-ribulose 5-phosphate (non-oxidative stage): step 1/1. Catalyzes the reversible conversion of ribose-5-phosphate to ribulose 5-phosphate. This Cereibacter sphaeroides (strain ATCC 17029 / ATH 2.4.9) (Rhodobacter sphaeroides) protein is Ribose-5-phosphate isomerase A.